The chain runs to 130 residues: Small ribosomal subunit protein uS8 (130 aa).

This sequence belongs to the universal ribosomal protein uS8 family. As to quaternary structure, part of the 30S ribosomal subunit. Contacts proteins S5 and S12.

One of the primary rRNA binding proteins, it binds directly to 16S rRNA central domain where it helps coordinate assembly of the platform of the 30S subunit. The sequence is that of Small ribosomal subunit protein uS8 from Shewanella denitrificans (strain OS217 / ATCC BAA-1090 / DSM 15013).